A 683-amino-acid chain; its full sequence is Glycine--tRNA ligase beta subunit (683 aa).

Belongs to the class-II aminoacyl-tRNA synthetase family. In terms of assembly, tetramer of two alpha and two beta subunits.

Its subcellular location is the cytoplasm. It carries out the reaction tRNA(Gly) + glycine + ATP = glycyl-tRNA(Gly) + AMP + diphosphate. The polypeptide is Glycine--tRNA ligase beta subunit (Pseudomonas putida (strain GB-1)).